A 365-amino-acid chain; its full sequence is Alanine racemase (365 aa).

The Proton acceptor; specific for D-alanine role is filled by lysine 35. Position 35 is an N6-(pyridoxal phosphate)lysine (lysine 35). Arginine 130 contacts substrate. Tyrosine 256 acts as the Proton acceptor; specific for L-alanine in catalysis. Methionine 304 provides a ligand contact to substrate.

It belongs to the alanine racemase family. Requires pyridoxal 5'-phosphate as cofactor.

The catalysed reaction is L-alanine = D-alanine. It functions in the pathway amino-acid biosynthesis; D-alanine biosynthesis; D-alanine from L-alanine: step 1/1. Functionally, catalyzes the interconversion of L-alanine and D-alanine. May also act on other amino acids. This chain is Alanine racemase (alr), found in Polaromonas naphthalenivorans (strain CJ2).